A 174-amino-acid polypeptide reads, in one-letter code: Pituitary tumor-transforming gene 1 protein-interacting protein (174 aa).

The signal sequence occupies residues 1–29 (MAPANLGLTPHWVMLLGAVLLLLLSGASA). Residues 30-93 (QEPPRVGCSE…RWGVCWVNFE (64 aa)) are Extracellular-facing. Residues 36-89 (GCSEYTNRSCEECLRNVSCLWCNENKACMDYPVRKILPPASLCKLSSARWGVCW) enclose the PSI domain. N-linked (GlcNAc...) asparagine glycans are attached at residues asparagine 42 and asparagine 51. The chain crosses the membrane as a helical span at residues 94–114 (ALIITMSVLGGSVLLGITVCC). Residues 115–174 (CYCCRRKKSRKPDKSDERAMREQEERRVRQEERRAEMKSRHDEIRKKYGLFKEQNPYEKF) lie on the Cytoplasmic side of the membrane. The disordered stretch occupies residues 125–155 (KPDKSDERAMREQEERRVRQEERRAEMKSRH). Positions 126–155 (PDKSDERAMREQEERRVRQEERRAEMKSRH) are enriched in basic and acidic residues. Residues 127–163 (DKSDERAMREQEERRVRQEERRAEMKSRHDEIRKKYG) are a coiled coil. At tyrosine 171 the chain carries Phosphotyrosine.

In terms of assembly, interacts with PTTG1.

It is found in the cell membrane. The protein localises to the cytoplasm. The protein resides in the nucleus. May facilitate PTTG1 nuclear translocation. The polypeptide is Pituitary tumor-transforming gene 1 protein-interacting protein (Pttg1ip) (Mus musculus (Mouse)).